We begin with the raw amino-acid sequence, 198 residues long: MIIDLIWIITSYVIGSIPFGVLFANIFCGIDPRTLGSGNVGATNITRICGRKLGFITLFFDVLKGFFPVVIATYLSESPFMYTMTGLAAIIGHLYSCFLHFKGGKAVATSIGVLIPIAFWQLLFAAILCTFFIWRSGFVSLGSLVLVTSLPIILFITGKFAYIPLSLIIMALIFWSHKQNIQRLIKGEEKVWKHSESI.

A run of 5 helical transmembrane segments spans residues 2-22, 53-73, 79-99, 113-133, and 152-172; these read IIDL…FGVL, LGFI…VIAT, PFMY…SCFL, VLIP…TFFI, and IILF…IMAL.

This sequence belongs to the PlsY family. Probably interacts with PlsX.

The protein resides in the cell membrane. It carries out the reaction an acyl phosphate + sn-glycerol 3-phosphate = a 1-acyl-sn-glycero-3-phosphate + phosphate. Its pathway is lipid metabolism; phospholipid metabolism. Functionally, catalyzes the transfer of an acyl group from acyl-phosphate (acyl-PO(4)) to glycerol-3-phosphate (G3P) to form lysophosphatidic acid (LPA). This enzyme utilizes acyl-phosphate as fatty acyl donor, but not acyl-CoA or acyl-ACP. This chain is Glycerol-3-phosphate acyltransferase, found in Lawsonia intracellularis (strain PHE/MN1-00).